Reading from the N-terminus, the 82-residue chain is Small ribosomal subunit protein uS17 (82 aa).

It belongs to the universal ribosomal protein uS17 family. Part of the 30S ribosomal subunit.

Its function is as follows. One of the primary rRNA binding proteins, it binds specifically to the 5'-end of 16S ribosomal RNA. The sequence is that of Small ribosomal subunit protein uS17 from Shewanella halifaxensis (strain HAW-EB4).